The primary structure comprises 89 residues: Small ribosomal subunit protein bS20 (89 aa).

The disordered stretch occupies residues 1–27; it reads MANIKSAKKDSIISEERRKKNASQRSK. Over residues 7-18 the composition is skewed to basic and acidic residues; it reads AKKDSIISEERR.

Belongs to the bacterial ribosomal protein bS20 family.

Binds directly to 16S ribosomal RNA. The polypeptide is Small ribosomal subunit protein bS20 (Buchnera aphidicola subsp. Schizaphis graminum (strain Sg)).